Consider the following 487-residue polypeptide: V-type proton ATPase subunit B3 (487 aa).

The protein belongs to the ATPase alpha/beta chains family. As to quaternary structure, V-ATPase is a heteromultimeric enzyme composed of a peripheral catalytic V1 complex (components A to H) attached to an integral membrane V0 proton pore complex (components: a, c, c'', d and e).

The protein localises to the vacuole membrane. Functionally, non-catalytic subunit of the peripheral V1 complex of vacuolar ATPase. V-ATPase is responsible for acidifying a variety of intracellular compartments in eukaryotic cells. The chain is V-type proton ATPase subunit B3 (VHA-B3) from Arabidopsis thaliana (Mouse-ear cress).